Reading from the N-terminus, the 552-residue chain is T-box transcription factor TBX4 (552 aa).

A compositionally biased stretch (basic and acidic residues) spans 1 to 14; the sequence is MLQDKGLSESEEAF. The segment at 1–50 is disordered; sequence MLQDKGLSESEEAFRAPGPALGEASNTSTTNAPEPALATPGLSGAALSSP. The T-box DNA-binding region spans 76 to 256; the sequence is LHEKELWKKF…NNPFAKGFRG (181 aa). A Phosphoserine modification is found at S514.

It is found in the nucleus. In terms of biological role, transcriptional regulator that has an essential role in the organogenesis of lungs, pelvis, and hindlimbs. The chain is T-box transcription factor TBX4 (Tbx4) from Mus musculus (Mouse).